The primary structure comprises 500 residues: NAD(P)H-quinone oxidoreductase chain 4, chloroplastic (500 aa).

Helical transmembrane passes span 4 to 24 (LPWLTIIVILPISAGSSIPLF), 31 to 51 (IIRWYTLGICLLEFLLMTYTF), 87 to 107 (IGPISLTSFVTTLATLAAWPV), 111 to 131 (PRLFYFLMLAMYSGQVGLFAS), 134 to 154 (ILLFFLMWELELIPVYLLISM), 167 to 187 (FILYTAGGSIFISMGASSMGL), 207 to 227 (VVLEIVFYLGFFIAHAIKLPI), 242 to 262 (HYSTCMLLAGIPLKMGGYGLI), 274 to 294 (SLFSPWLVIVGAVQIIYAALT), 305 to 325 (IAYSSVSHMGFVIVGIGSMAD), 330 to 350 (GAILQMISHGLIGAALFFLAG), 358 to 378 (TLFLDGIGGMAIPMSKISTMF), 386 to 406 (LALPGMSGFVAESMVLLGIIT), 416 to 436 (IVIAAIMAIGMILTPIHLLSM), and 462 to 482 (IFISICLFLPVIGTGTYPDLV).

Belongs to the complex I subunit 4 family.

It localises to the plastid. Its subcellular location is the chloroplast thylakoid membrane. It carries out the reaction a plastoquinone + NADH + (n+1) H(+)(in) = a plastoquinol + NAD(+) + n H(+)(out). It catalyses the reaction a plastoquinone + NADPH + (n+1) H(+)(in) = a plastoquinol + NADP(+) + n H(+)(out). The chain is NAD(P)H-quinone oxidoreductase chain 4, chloroplastic from Cycas taitungensis (Prince sago).